The chain runs to 385 residues: Methionyl-tRNA formyltransferase, mitochondrial (385 aa).

Belongs to the Fmt family.

The protein localises to the mitochondrion. The enzyme catalyses L-methionyl-tRNA(fMet) + (6R)-10-formyltetrahydrofolate = N-formyl-L-methionyl-tRNA(fMet) + (6S)-5,6,7,8-tetrahydrofolate + H(+). Methionyl-tRNA formyltransferase that formylates methionyl-tRNA in mitochondria and is crucial for translation initiation. The chain is Methionyl-tRNA formyltransferase, mitochondrial (Mtfmt) from Rattus norvegicus (Rat).